Reading from the N-terminus, the 216-residue chain is Somatotropin (216 aa).

Positions 1–25 (MAPGSWFSPLFITVITLGLQWPQEA) are cleaved as a signal peptide. His-46 lines the Zn(2+) pocket. An intrachain disulfide couples Cys-78 to Cys-189. Glu-198 is a Zn(2+) binding site. A disulfide bridge links Cys-206 with Cys-214.

The protein belongs to the somatotropin/prolactin family.

The protein localises to the secreted. Growth hormone plays an important role in growth control. The protein is Somatotropin (GH) of Anas platyrhynchos (Mallard).